A 1033-amino-acid polypeptide reads, in one-letter code: SIT4-associating protein SAP190 (1033 aa).

Disordered stretches follow at residues 32-82, 147-213, 768-813, and 828-1033; these read DQDD…TTES, PEII…QVET, FGND…HDSG, and ENEE…KEAF. Residues 158-170 are compositionally biased toward basic and acidic residues; sequence ILIERDRKDKKED. Residues 171–182 are compositionally biased toward acidic residues; sequence AEEGGDSEETTN. A compositionally biased stretch (basic and acidic residues) spans 183-195; sequence DSDHDSGDERSVD. Residue S774 is modified to Phosphoserine. 2 stretches are compositionally biased toward acidic residues: residues 784-793 and 828-838; these read SEDIIGDTEG and ENEEDYAEYSD. 3 positions are modified to phosphoserine: S857, S862, and S892. Basic and acidic residues predominate over residues 858 to 879; that stretch reads DDGKSKSAESEFTDKISEHRDG. Residues 909–924 show a composition bias toward polar residues; the sequence is SRSQPSDPKLQDQNIF. Over residues 932 to 944 the composition is skewed to acidic residues; that stretch reads GVGDDDDYMDPND. T990 bears the Phosphothreonine mark. S991 carries the post-translational modification Phosphoserine. Residues 1000–1018 are compositionally biased toward acidic residues; it reads ISSDEEDSEDEDEENDMGN.

This sequence belongs to the SAPS family. Associates with the SIT4 protein phosphatase catalytic subunit in a cell-cycle-dependent manner. In terms of processing, hyperphosphorylated in the absence of SIT4.

The protein localises to the cytoplasm. Positive regulator of protein phosphatase SIT4. Involved in the general amino acid control (GAAC) response regulated by TOR. Involved in the dephosphorylation of the elongator complex subunit IKI3. The protein is SIT4-associating protein SAP190 (SAP190) of Saccharomyces cerevisiae (strain AWRI1631) (Baker's yeast).